Reading from the N-terminus, the 362-residue chain is Adenosine kinase (362 aa).

Ala2 is subject to N-acetylalanine. Positions Pro8–Glu16 match the Nuclear localization signal motif. An adenosine-binding site is contributed by Asp35. Residue Ser49 coordinates Mg(2+). Tyr77 is modified (phosphotyrosine). Residues Asp147 and Asn148 each contribute to the Mg(2+) site. Residue Gln306 coordinates adenosine. Catalysis depends on Asp317, which acts as the Proton acceptor.

This sequence belongs to the carbohydrate kinase PfkB family. As to quaternary structure, monomer. Mg(2+) is required as a cofactor. As to expression, widely expressed. Highest level in placenta, liver, muscle and kidney.

It localises to the nucleus. Its subcellular location is the cytoplasm. The enzyme catalyses adenosine + ATP = AMP + ADP + H(+). Its pathway is purine metabolism; AMP biosynthesis via salvage pathway; AMP from adenosine: step 1/1. Its activity is regulated as follows. Activity is inhibited by 5-iodotubercidin and 5'-amino-5'-deoxyadenosine. Its function is as follows. Catalyzes the phosphorylation of the purine nucleoside adenosine at the 5' position in an ATP-dependent manner. Serves as a potential regulator of concentrations of extracellular adenosine and intracellular adenine nucleotides. The chain is Adenosine kinase from Homo sapiens (Human).